We begin with the raw amino-acid sequence, 214 residues long: Large ribosomal subunit protein uL29m (214 aa).

This sequence belongs to the universal ribosomal protein uL29 family. Component of the mitochondrial large ribosomal subunit. Mature mitochondrial ribosomes consist of a small (37S) and a large (54S) subunit. The 37S subunit contains at least 33 different proteins and 1 molecule of RNA (15S). The 54S subunit contains at least 45 different proteins and 1 molecule of RNA (21S).

It is found in the mitochondrion. This Aspergillus terreus (strain NIH 2624 / FGSC A1156) protein is Large ribosomal subunit protein uL29m (mrpl4).